Consider the following 294-residue polypeptide: Bifunctional protein FolD (294 aa).

Residues Gly171–Ser173, Ser196, and Ile237 contribute to the NADP(+) site.

It belongs to the tetrahydrofolate dehydrogenase/cyclohydrolase family. Homodimer.

The enzyme catalyses (6R)-5,10-methylene-5,6,7,8-tetrahydrofolate + NADP(+) = (6R)-5,10-methenyltetrahydrofolate + NADPH. The catalysed reaction is (6R)-5,10-methenyltetrahydrofolate + H2O = (6R)-10-formyltetrahydrofolate + H(+). It participates in one-carbon metabolism; tetrahydrofolate interconversion. Functionally, catalyzes the oxidation of 5,10-methylenetetrahydrofolate to 5,10-methenyltetrahydrofolate and then the hydrolysis of 5,10-methenyltetrahydrofolate to 10-formyltetrahydrofolate. This Synechocystis sp. (strain ATCC 27184 / PCC 6803 / Kazusa) protein is Bifunctional protein FolD.